The sequence spans 469 residues: Glutamate--tRNA ligase (469 aa).

Residues 11–21 carry the 'HIGH' region motif; it reads PSPTGFIHLGN. Residues 118 to 131 show a composition bias toward basic and acidic residues; the sequence is GEKPRYDGTWRPEP. A disordered region spans residues 118–138; it reads GEKPRYDGTWRPEPGKVLPEP. The 'KMSKS' region signature appears at 243-247; sequence KMSKR. Position 246 (Lys-246) interacts with ATP.

The protein belongs to the class-I aminoacyl-tRNA synthetase family. Glutamate--tRNA ligase type 1 subfamily. In terms of assembly, monomer.

It localises to the cytoplasm. The catalysed reaction is tRNA(Glu) + L-glutamate + ATP = L-glutamyl-tRNA(Glu) + AMP + diphosphate. Functionally, catalyzes the attachment of glutamate to tRNA(Glu) in a two-step reaction: glutamate is first activated by ATP to form Glu-AMP and then transferred to the acceptor end of tRNA(Glu). The chain is Glutamate--tRNA ligase from Burkholderia vietnamiensis (strain G4 / LMG 22486) (Burkholderia cepacia (strain R1808)).